A 51-amino-acid polypeptide reads, in one-letter code: Insulin (51 aa).

Cystine bridges form between C7-C37, C19-C50, and C36-C41.

This sequence belongs to the insulin family. In terms of assembly, heterodimer of a B chain and an A chain linked by two disulfide bonds.

It localises to the secreted. Insulin decreases blood glucose concentration. It increases cell permeability to monosaccharides, amino acids and fatty acids. It accelerates glycolysis, the pentose phosphate cycle, and glycogen synthesis in liver. This Balaenoptera physalus (Fin whale) protein is Insulin (INS).